The chain runs to 250 residues: MGQKSNPNGLRLGIIRTWESKWYDVDKKVPFLVGEDFKIRTLIKNHYPKSTISQIEIKRLKKSNDEFIEIDLYTSKIGIIQGPENKNKNSLINKIEKLINKKIQINIFEVKAFNKIAILVAQNIAMQLQQRAFYKAVLKSAIQKALKSGIKGIKIIITGRLGGAEKARRNSISMGIVPLNTLRADIDYAFEEAHTTYGVLGVKVIINHGEVLPNKTIADTRQIFSSQYENKKNNNKRHFVNKKNFKTSTS.

The KH type-2 domain occupies 39 to 111 (IRTLIKNHYP…KIQINIFEVK (73 aa)).

Belongs to the universal ribosomal protein uS3 family. Part of the 30S ribosomal subunit. Forms a tight complex with proteins S10 and S14.

Its function is as follows. Binds the lower part of the 30S subunit head. Binds mRNA in the 70S ribosome, positioning it for translation. This is Small ribosomal subunit protein uS3 from Elm witches'-broom phytoplasma.